The chain runs to 347 residues: Eukaryotic translation initiation factor 3 subunit H (347 aa).

The MPN domain maps to 1-142; sequence MKIMKHCSQT…LRAFRLSPRF (142 aa).

The protein belongs to the eIF-3 subunit H family. Component of the eukaryotic translation initiation factor 3 (eIF-3) complex.

The protein resides in the cytoplasm. Functionally, component of the eukaryotic translation initiation factor 3 (eIF-3) complex, which is involved in protein synthesis of a specialized repertoire of mRNAs and, together with other initiation factors, stimulates binding of mRNA and methionyl-tRNAi to the 40S ribosome. The eIF-3 complex specifically targets and initiates translation of a subset of mRNAs involved in cell proliferation. The protein is Eukaryotic translation initiation factor 3 subunit H of Neosartorya fischeri (strain ATCC 1020 / DSM 3700 / CBS 544.65 / FGSC A1164 / JCM 1740 / NRRL 181 / WB 181) (Aspergillus fischerianus).